The primary structure comprises 544 residues: 4-coumarate--CoA ligase 1 (544 aa).

Residues serine 190, serine 191, glycine 192, threonine 193, threonine 194, and lysine 198 each coordinate ATP. Tyrosine 240 provides a ligand contact to (E)-4-coumaroyl-AMP. Lysine 261 provides a ligand contact to CoA. Residues 263-332 form an SBD1 region; the sequence is DIVPFLELIQ…AKFPNAKLGQ (70 aa). (E)-4-coumaroyl-AMP-binding residues include alanine 310, glutamine 332, glycine 333, threonine 337, and methionine 345. ATP is bound by residues glutamine 332, glycine 333, and threonine 337. The interval 333-400 is SBD2; sequence GYGMTEAGPV…IRGDQIMKGY (68 aa). ATP is bound by residues aspartate 421 and arginine 436. 2 residues coordinate (E)-4-coumaroyl-AMP: lysine 438 and lysine 442. 2 residues coordinate CoA: lysine 444 and glycine 445. Residue lysine 527 coordinates ATP.

This sequence belongs to the ATP-dependent AMP-binding enzyme family. The cofactor is Mg(2+).

It carries out the reaction (E)-4-coumarate + ATP + CoA = (E)-4-coumaroyl-CoA + AMP + diphosphate. It catalyses the reaction (E)-4-coumarate + ATP + H(+) = (E)-4-coumaroyl-AMP + diphosphate. The enzyme catalyses (E)-4-coumaroyl-AMP + CoA = (E)-4-coumaroyl-CoA + AMP + H(+). The protein operates within phytoalexin biosynthesis; 3,4',5-trihydroxystilbene biosynthesis; 3,4',5-trihydroxystilbene from trans-4-coumarate: step 1/2. Functionally, carboxylate--CoA ligase that may use 4-coumarate as substrate. Follows a two-step reaction mechanism, wherein the carboxylate substrate first undergoes adenylation by ATP, followed by a thioesterification in the presence of CoA to yield the final CoA thioester. This chain is 4-coumarate--CoA ligase 1 (4CL1), found in Petroselinum crispum (Parsley).